Consider the following 530-residue polypeptide: uncharacterized protein (530 aa).

2 stretches are compositionally biased toward polar residues: residues 60–74 (LNES…SSTP) and 92–103 (GQGTSRPLPTLS). Disordered stretches follow at residues 60 to 103 (LNES…PTLS) and 121 to 155 (ASST…GLGN). Basic and acidic residues predominate over residues 131 to 142 (PDPRDAPREGSF).

This is an uncharacterized protein from Mus musculus (Mouse).